Here is a 66-residue protein sequence, read N- to C-terminus: Phylloseptin-S2 (66 aa).

The first 22 residues, 1-22 (MAFLKKSLFLVLFLGLVSLSIC), serve as a signal peptide directing secretion. Positions 23–46 (EEEKRETEEEEHDQEEDDKSEEKR) are excised as a propeptide. Residues 25-44 (EKRETEEEEHDQEEDDKSEE) form a disordered region. Over residues 30–41 (EEEEHDQEEDDK) the composition is skewed to acidic residues. Phenylalanine 65 is subject to Phenylalanine amide.

As to expression, expressed by the skin glands.

The protein resides in the secreted. Its subcellular location is the target cell membrane. Antimicrobial peptide with high activity against Gram-positive bacteria, moderate activity against Gram-negative bacteria, and moderate activity against fungi. Acts by causing bacterial membrane disruption inducing leakage of the intracellular content followed by cell death. It adopts an alpha-helical amphipathic structure in membrane environments. Also shows highly potent antiparasitic activity against Leishmania species. Shows moderate hemolytic activity on human erythrocytes (LC(50)=25 uM). Is also active on human monocytes (IC(50)=22.5 uM). The chain is Phylloseptin-S2 from Phyllomedusa sauvagei (Sauvage's leaf frog).